The following is a 140-amino-acid chain: Nuclear receptor 2C2-associated protein (140 aa).

It belongs to the NR2C2AP family. As to quaternary structure, interacts with NR2C2/TR4.

It localises to the nucleus. Functionally, may act as a repressor of NR2C2-mediated transactivation by suppressing the binding between NR2C2/TR4 and the TR4-response element in target genes. The protein is Nuclear receptor 2C2-associated protein (NR2C2AP) of Bos taurus (Bovine).